The sequence spans 115 residues: Large ribosomal subunit protein P2 (115 aa).

M1 is subject to N-acetylmethionine. Phosphoserine occurs at positions 17 and 19. An N6-acetyllysine; alternate modification is found at K21. N6-succinyllysine; alternate is present on K21. The segment covering 76 to 90 (APGSAAPAAGSAPAA) has biased composition (low complexity). A disordered region spans residues 76–115 (APGSAAPAAGSAPAAAEEKKEEKKEESEESDDDMGFGLFD). Phosphoserine occurs at positions 79 and 86. Over residues 91–101 (AEEKKEEKKEE) the composition is skewed to basic and acidic residues. S102 and S105 each carry phosphoserine.

It belongs to the eukaryotic ribosomal protein P1/P2 family. Heterodimer with RPLP1 at the lateral ribosomal stalk of the large ribosomal subunit.

Functionally, plays an important role in the elongation step of protein synthesis. The polypeptide is Large ribosomal subunit protein P2 (RPLP2) (Bos taurus (Bovine)).